An 83-amino-acid chain; its full sequence is CLAVATA3/ESR (CLE)-related protein 20 (83 aa).

An N-terminal signal peptide occupies residues 1 to 29 (MKNKNMNPSRPRLLCLIVFLFLVIVLSKA).

Belongs to the CLV3/ESR signal peptide family. Mostly expressed in roots, seedlings, leaves, flowers, stems and apex, and, to a lower extent, in siliques and pollen.

Its subcellular location is the secreted. It is found in the extracellular space. Its function is as follows. Extracellular signal peptide that regulates cell fate. Represses root apical meristem maintenance. Inhibits irreversibly root growth by reducing cell division rates in the root apical meristem. Regulates the transition of protophloem cells from proliferation to differentiation, thus impinging on postembryonic growth capacity of the root meristem; this signaling pathway requires CRN and CLV2. This Arabidopsis thaliana (Mouse-ear cress) protein is CLAVATA3/ESR (CLE)-related protein 20.